Consider the following 169-residue polypeptide: Ribosomal RNA large subunit methyltransferase H (169 aa).

S-adenosyl-L-methionine is bound by residues Leu-85, Gly-117, and 136–141 (LGELTW).

Belongs to the RNA methyltransferase RlmH family. Homodimer.

Its subcellular location is the cytoplasm. It carries out the reaction pseudouridine(1915) in 23S rRNA + S-adenosyl-L-methionine = N(3)-methylpseudouridine(1915) in 23S rRNA + S-adenosyl-L-homocysteine + H(+). Its function is as follows. Specifically methylates the pseudouridine at position 1915 (m3Psi1915) in 23S rRNA. This is Ribosomal RNA large subunit methyltransferase H from Brucella abortus biovar 1 (strain 9-941).